We begin with the raw amino-acid sequence, 156 residues long: Calcium-binding protein A (156 aa).

4 consecutive EF-hand domains span residues 4 to 39 (AITKDVEDMLRKFDSNGDGNITFDEAVKRLKETGSK), 40 to 75 (DPLRAASSMFISLDKDKDGIISIKEIHGHKADVAAK), 80 to 115 (AINNICNNFLKGYDTDKDGRISWDEVCNWVNKNNPD), and 118 to 153 (APLMIVENFFSELDKDNDRFVTKCELQEYVTKYKSL). The Ca(2+) site is built by D17, N19, D21, N23, E28, D53, D55, D57, E64, D93, D95, D97, R99, E104, D131, D133, D135, and E142.

In Dictyostelium discoideum (Social amoeba), this protein is Calcium-binding protein A (cbpA).